Reading from the N-terminus, the 140-residue chain is Photosystem I reaction center subunit XI (140 aa).

3 consecutive transmembrane segments (helical) span residues Leu48–Leu68, Leu79–Val99, and Ser119–Phe139.

The protein belongs to the PsaL family.

The protein resides in the plastid. It localises to the chloroplast thylakoid membrane. This is Photosystem I reaction center subunit XI from Cyanidioschyzon merolae (strain NIES-3377 / 10D) (Unicellular red alga).